A 369-amino-acid polypeptide reads, in one-letter code: MLRVYTQLERGNQWLKQYEGRSPIFACVLGFTETGLIPNVSTAGATPADRSLTALADAEFLFNGPQSQPTYPLPDLAQGVSPAMISWPIYTSQNFPFQLFNAGLRHSPPVPTVDLRGQAARCLSSGMALPLPIVELLFQQGLEWGETLAKQAADGYLILAECVVGGTSTAQGILTGLGFSVAGQVNSSHPVCNHQQKHQLVEAGLAQAGQQDWLAHPLALVAAVGDPMQVVVAGMMITASRTCGVMLAGGTQMLAVYALARQISQIFRLPWTPDNLLVGTTRWVVEDPSGDTVALANQVGEVPLVATQLSFATSRYPQLQIFEQGFVKEGVGAGGCAIAAHLYQGWQQNDILNAVEQTLEDYYRLRDPN.

The protein belongs to the UPF0284 family.

In Acaryochloris marina (strain MBIC 11017), this protein is UPF0284 protein AM1_5137.